The chain runs to 230 residues: UPF0502 protein Patl_1161 (230 aa).

This sequence belongs to the UPF0502 family.

This Pseudoalteromonas atlantica (strain T6c / ATCC BAA-1087) protein is UPF0502 protein Patl_1161.